A 510-amino-acid polypeptide reads, in one-letter code: Polyamine aminopropyltransferase 2 (510 aa).

The next 6 membrane-spanning stretches (helical) occupy residues 6 to 26, 38 to 58, 74 to 94, 102 to 122, 140 to 160, and 165 to 185; these read ALLV…ELIA, ILQF…GSWV, LELL…LLFA, LVLY…IPLV, VLTF…LVLA, and LVRT…WTLW. The 245-residue stretch at 205–449 folds into the PABS domain; that stretch reads AGMVGAALLA…GEWGFILAAP (245 aa). The interval 207–456 is spermidine synthase; sequence MVGAALLAGF…AAPGRADFRP (250 aa). Residue Gln244 coordinates S-methyl-5'-thioadenosine. Residues His274 and Asp298 each contribute to the spermidine site. S-methyl-5'-thioadenosine contacts are provided by residues Asp318 and 352–353; that span reads DA. Asp370 functions as the Proton acceptor in the catalytic mechanism.

It belongs to the spermidine/spermine synthase family. Homodimer or homotetramer.

Its subcellular location is the cell membrane. The enzyme catalyses S-adenosyl 3-(methylsulfanyl)propylamine + putrescine = S-methyl-5'-thioadenosine + spermidine + H(+). Its pathway is amine and polyamine biosynthesis; spermidine biosynthesis; spermidine from putrescine: step 1/1. Its function is as follows. Catalyzes the irreversible transfer of a propylamine group from the amino donor S-adenosylmethioninamine (decarboxy-AdoMet) to putrescine (1,4-diaminobutane) to yield spermidine. This Ralstonia nicotianae (strain ATCC BAA-1114 / GMI1000) (Ralstonia solanacearum) protein is Polyamine aminopropyltransferase 2.